Reading from the N-terminus, the 1749-residue chain is Intraflagellar transport protein 172 homolog (1749 aa).

Methionine 1 is subject to N-acetylmethionine. Residue lysine 4 forms a Glycyl lysine isopeptide (Lys-Gly) (interchain with G-Cter in SUMO1) linkage. WD repeat units follow at residues 14–53 (DGAA…RDKF), 64–103 (RKSY…GDKK), 110–148 (IQTS…SSTI), 150–191 (GTES…ESQG), 195–233 (NHPC…QTFD), 238–278 (PQER…WEEA), 284–323 (ANLY…SIYK), 483–520 (SHES…CSKT), and 521–559 (MILN…ERVT). A TPR 1 repeat occupies 593–624 (DEGLIEFGTAIDDGNYTRATAFLETLEMTPET). Arginine 672 is subject to Omega-N-methylarginine. TPR repeat units follow at residues 692–725 (EKNY…EECI), 809–842 (GELY…MKAV), 854–887 (VRLE…IKAI), 912–945 (SKYY…KDAI), 947–970 (MYTQ…PEDV), 971–1004 (SVLY…DLAI), 1042–1075 (EGRL…EEAY), 1142–1175 (PEIH…KEAV), 1276–1309 (VEGL…GSSG), 1345–1378 (IGKH…NKAK), 1411–1445 (GVDV…LHKY), 1447–1477 (ALYA…NPQN), and 1574–1607 (DKAF…TDAI).

It belongs to the IFT172 family. In terms of assembly, interacts with IFT88. Interacts with IFT57. Interacts with RABL2/RABL2A; binds preferentially to GDP-bound RABL2. As to expression, co-localizes with RABL2/RABL2A in the midpiece of elongated spermatids within the testis (at protein level). Expressed in the flagellum of elongated spermatids and sperm in the testis lumen (at protein level).

It is found in the cell projection. The protein resides in the cilium. Its function is as follows. Required for the maintenance and formation of cilia. Plays an indirect role in hedgehog (Hh) signaling, cilia being required for all activity of the hedgehog pathway. The polypeptide is Intraflagellar transport protein 172 homolog (Ift172) (Mus musculus (Mouse)).